The primary structure comprises 247 residues: Aspartate/glutamate leucyltransferase (247 aa).

This sequence belongs to the R-transferase family. Bpt subfamily.

The protein resides in the cytoplasm. It catalyses the reaction N-terminal L-glutamyl-[protein] + L-leucyl-tRNA(Leu) = N-terminal L-leucyl-L-glutamyl-[protein] + tRNA(Leu) + H(+). It carries out the reaction N-terminal L-aspartyl-[protein] + L-leucyl-tRNA(Leu) = N-terminal L-leucyl-L-aspartyl-[protein] + tRNA(Leu) + H(+). In terms of biological role, functions in the N-end rule pathway of protein degradation where it conjugates Leu from its aminoacyl-tRNA to the N-termini of proteins containing an N-terminal aspartate or glutamate. The sequence is that of Aspartate/glutamate leucyltransferase from Dechloromonas aromatica (strain RCB).